The following is a 135-amino-acid chain: Mini-ribonuclease 3 (135 aa).

Asp-19 is an active-site residue.

This sequence belongs to the MrnC RNase family. Homodimer. Requires Mg(2+) as cofactor.

The protein localises to the cytoplasm. Involved in correct processing of both the 5' and 3' ends of 23S rRNA precursor. Processes 30S rRNA precursor transcript even in absence of ribonuclease 3 (Rnc); Rnc processes 30S rRNA into smaller rRNA precursors. The protein is Mini-ribonuclease 3 of Gloeobacter violaceus (strain ATCC 29082 / PCC 7421).